Reading from the N-terminus, the 268-residue chain is Ribonuclease P protein subunit p30 (268 aa).

Ala-2 carries the post-translational modification N-acetylalanine. The disordered stretch occupies residues 247 to 268 (KPRPSEGDEDCLPASKKAKCEG). Ser-251 is modified (phosphoserine).

It belongs to the eukaryotic/archaeal RNase P protein component 3 family. In terms of assembly, component of nuclear RNase P and RNase MRP ribonucleoproteins. RNase P consists of a catalytic RNA moiety and about 10 protein subunits; POP1, POP4, POP5, POP7, RPP14, RPP21, RPP25, RPP30, RPP38 and RPP40. Within the RNase P complex, POP1, POP7 and RPP25 form the 'finger' subcomplex, POP5, RPP14, RPP40 and homodimeric RPP30 form the 'palm' subcomplex, and RPP21, POP4 and RPP38 form the 'wrist' subcomplex. All subunits of the RNase P complex interact with the catalytic RNA. Several subunits of RNase P are also part of the RNase MRP complex. RNase MRP consists of a catalytic RNA moiety and about 8 protein subunits; POP1, POP7, RPP25, RPP30, RPP38, RPP40 and possibly also POP4 and POP5.

The protein resides in the nucleus. The protein localises to the nucleolus. Functionally, component of ribonuclease P, a ribonucleoprotein complex that generates mature tRNA molecules by cleaving their 5'-ends. Also a component of the MRP ribonuclease complex, which cleaves pre-rRNA sequences. The protein is Ribonuclease P protein subunit p30 (RPP30) of Homo sapiens (Human).